The primary structure comprises 426 residues: Serine--tRNA ligase (426 aa).

Position 229–231 (229–231) interacts with L-serine; that stretch reads TAE. Residues 260-262 and Val-276 each bind ATP; that span reads RKE. Glu-283 serves as a coordination point for L-serine. Residue 349-352 coordinates ATP; that stretch reads EVTS. Position 384 (Thr-384) interacts with L-serine.

Belongs to the class-II aminoacyl-tRNA synthetase family. Type-1 seryl-tRNA synthetase subfamily. Homodimer. The tRNA molecule binds across the dimer.

It is found in the cytoplasm. It carries out the reaction tRNA(Ser) + L-serine + ATP = L-seryl-tRNA(Ser) + AMP + diphosphate + H(+). The enzyme catalyses tRNA(Sec) + L-serine + ATP = L-seryl-tRNA(Sec) + AMP + diphosphate + H(+). It functions in the pathway aminoacyl-tRNA biosynthesis; selenocysteinyl-tRNA(Sec) biosynthesis; L-seryl-tRNA(Sec) from L-serine and tRNA(Sec): step 1/1. Its function is as follows. Catalyzes the attachment of serine to tRNA(Ser). Is also able to aminoacylate tRNA(Sec) with serine, to form the misacylated tRNA L-seryl-tRNA(Sec), which will be further converted into selenocysteinyl-tRNA(Sec). This is Serine--tRNA ligase from Treponema pallidum (strain Nichols).